The primary structure comprises 417 residues: Serine hydroxymethyltransferase (417 aa).

(6S)-5,6,7,8-tetrahydrofolate is bound by residues Leu121 and Gly125–Leu127. The residue at position 229 (Lys229) is an N6-(pyridoxal phosphate)lysine. Ser355–Phe357 is a (6S)-5,6,7,8-tetrahydrofolate binding site.

Belongs to the SHMT family. As to quaternary structure, homodimer. Pyridoxal 5'-phosphate is required as a cofactor.

The protein resides in the cytoplasm. It catalyses the reaction (6R)-5,10-methylene-5,6,7,8-tetrahydrofolate + glycine + H2O = (6S)-5,6,7,8-tetrahydrofolate + L-serine. The protein operates within one-carbon metabolism; tetrahydrofolate interconversion. Its pathway is amino-acid biosynthesis; glycine biosynthesis; glycine from L-serine: step 1/1. Functionally, catalyzes the reversible interconversion of serine and glycine with tetrahydrofolate (THF) serving as the one-carbon carrier. This reaction serves as the major source of one-carbon groups required for the biosynthesis of purines, thymidylate, methionine, and other important biomolecules. Also exhibits THF-independent aldolase activity toward beta-hydroxyamino acids, producing glycine and aldehydes, via a retro-aldol mechanism. The chain is Serine hydroxymethyltransferase from Shewanella baltica (strain OS155 / ATCC BAA-1091).